Reading from the N-terminus, the 219-residue chain is Leucyl/phenylalanyl-tRNA--protein transferase (219 aa).

Belongs to the L/F-transferase family.

It is found in the cytoplasm. It catalyses the reaction N-terminal L-lysyl-[protein] + L-leucyl-tRNA(Leu) = N-terminal L-leucyl-L-lysyl-[protein] + tRNA(Leu) + H(+). The catalysed reaction is N-terminal L-arginyl-[protein] + L-leucyl-tRNA(Leu) = N-terminal L-leucyl-L-arginyl-[protein] + tRNA(Leu) + H(+). The enzyme catalyses L-phenylalanyl-tRNA(Phe) + an N-terminal L-alpha-aminoacyl-[protein] = an N-terminal L-phenylalanyl-L-alpha-aminoacyl-[protein] + tRNA(Phe). Its function is as follows. Functions in the N-end rule pathway of protein degradation where it conjugates Leu, Phe and, less efficiently, Met from aminoacyl-tRNAs to the N-termini of proteins containing an N-terminal arginine or lysine. In Leptospira borgpetersenii serovar Hardjo-bovis (strain JB197), this protein is Leucyl/phenylalanyl-tRNA--protein transferase.